Here is a 156-residue protein sequence, read N- to C-terminus: ATP synthase subunit b (156 aa).

Residues 7–27 (LIGQAIWFALFVFFCMKFVWP) traverse the membrane as a helical segment.

It belongs to the ATPase B chain family. F-type ATPases have 2 components, F(1) - the catalytic core - and F(0) - the membrane proton channel. F(1) has five subunits: alpha(3), beta(3), gamma(1), delta(1), epsilon(1). F(0) has three main subunits: a(1), b(2) and c(10-14). The alpha and beta chains form an alternating ring which encloses part of the gamma chain. F(1) is attached to F(0) by a central stalk formed by the gamma and epsilon chains, while a peripheral stalk is formed by the delta and b chains.

It is found in the cell inner membrane. Functionally, f(1)F(0) ATP synthase produces ATP from ADP in the presence of a proton or sodium gradient. F-type ATPases consist of two structural domains, F(1) containing the extramembraneous catalytic core and F(0) containing the membrane proton channel, linked together by a central stalk and a peripheral stalk. During catalysis, ATP synthesis in the catalytic domain of F(1) is coupled via a rotary mechanism of the central stalk subunits to proton translocation. Its function is as follows. Component of the F(0) channel, it forms part of the peripheral stalk, linking F(1) to F(0). In Alcanivorax borkumensis (strain ATCC 700651 / DSM 11573 / NCIMB 13689 / SK2), this protein is ATP synthase subunit b.